Reading from the N-terminus, the 558-residue chain is MSIVLFLIVFILLSLIVSRYLYSVALNVPSKIDVVFNPIEKLIYQLIGTKLEHMSGKTYIKHFLLFNGLMGGLSFVLLLIQQWLFLNPNHNLNQSVSLAFNTMASFLTNTNLQHYAGETDLSYLTQMCVITFLMFTSAASGYAVCIAMLRRLTGMTDVIGNFYQDITRFIVRVLIPFALIISLFLISQGTPQTLKGNLVIETLSGVKQTIAYGPMASLESIKHLGTNGGGFLGANSSTPFENPTYWSNYAEALSMMLIPGSLVFLFGRMLKTKLQIHPHAIMIFVAMFVMFIGFLVTCLYFEFAGNPVLHHLGIAGGNMEGKETRFGIGLSALFTTITTAFTTGTVNNMHDSLTPLGGMVPMVLMMLNAVFGGEGVGLMNMLIYVMLTVFICSLMIGKTPSYLGMKIEGKEMKLIALSFLVHPLLILVFSALAFIVPGASDALTNPQFHGVSQVLYEFTSSSANNGSGFEGLGDNTVFWNISTGIVMLLARYIPIVLQILIVSSLVNKKTYQQHTQDVPINNLFFSSVLIIFIILLSGLTFLPDLMLGPIGEQLLLHA.

Transmembrane regions (helical) follow at residues 1-21 (MSIV…SRYL), 60-80 (IKHF…LLLI), 129-149 (VITF…IAML), 169-189 (FIVR…ISQG), 246-266 (WSNY…VFLF), 281-301 (IMIF…CLYF), 326-346 (FGIG…TGTV), 353-373 (LTPL…VFGG), 376-396 (VGLM…SLMI), 415-435 (IALS…LAFI), 485-505 (IVML…VSSL), and 523-543 (LFFS…TFLP).

Belongs to the KdpA family. The system is composed of three essential subunits: KdpA, KdpB and KdpC.

Its subcellular location is the cell membrane. Its function is as follows. Part of the high-affinity ATP-driven potassium transport (or Kdp) system, which catalyzes the hydrolysis of ATP coupled with the electrogenic transport of potassium into the cytoplasm. This subunit binds the extracellular potassium ions and delivers the ions to the membrane domain of KdpB through an intramembrane tunnel. The sequence is that of Potassium-transporting ATPase potassium-binding subunit 2 from Staphylococcus aureus (strain Mu50 / ATCC 700699).